Here is a 456-residue protein sequence, read N- to C-terminus: Bifunctional protein GlmU (456 aa).

The interval 1–230 (MDKRFAVVLA…FQETLGVNDR (230 aa)) is pyrophosphorylase. Residues 9–12 (LAAG), Lys23, Gln73, and 78–79 (GT) each bind UDP-N-acetyl-alpha-D-glucosamine. Mg(2+) is bound at residue Asp103. 4 residues coordinate UDP-N-acetyl-alpha-D-glucosamine: Gly140, Glu155, Asn170, and Asn228. Asn228 lines the Mg(2+) pocket. The interval 231–251 (VALSQAEIYMKQRINKRHMQN) is linker. The interval 252 to 456 (GVSLIDPDNT…EDYAENIHKK (205 aa)) is N-acetyltransferase. 2 residues coordinate UDP-N-acetyl-alpha-D-glucosamine: Arg333 and Lys351. The active-site Proton acceptor is the His363. Residues Tyr366 and Asn377 each contribute to the UDP-N-acetyl-alpha-D-glucosamine site. Acetyl-CoA contacts are provided by residues 386-387 (NY), Ala423, and Arg440.

This sequence in the N-terminal section; belongs to the N-acetylglucosamine-1-phosphate uridyltransferase family. The protein in the C-terminal section; belongs to the transferase hexapeptide repeat family. Homotrimer. Requires Mg(2+) as cofactor.

Its subcellular location is the cytoplasm. The enzyme catalyses alpha-D-glucosamine 1-phosphate + acetyl-CoA = N-acetyl-alpha-D-glucosamine 1-phosphate + CoA + H(+). It catalyses the reaction N-acetyl-alpha-D-glucosamine 1-phosphate + UTP + H(+) = UDP-N-acetyl-alpha-D-glucosamine + diphosphate. The protein operates within nucleotide-sugar biosynthesis; UDP-N-acetyl-alpha-D-glucosamine biosynthesis; N-acetyl-alpha-D-glucosamine 1-phosphate from alpha-D-glucosamine 6-phosphate (route II): step 2/2. It participates in nucleotide-sugar biosynthesis; UDP-N-acetyl-alpha-D-glucosamine biosynthesis; UDP-N-acetyl-alpha-D-glucosamine from N-acetyl-alpha-D-glucosamine 1-phosphate: step 1/1. Its pathway is bacterial outer membrane biogenesis; LPS lipid A biosynthesis. Catalyzes the last two sequential reactions in the de novo biosynthetic pathway for UDP-N-acetylglucosamine (UDP-GlcNAc). The C-terminal domain catalyzes the transfer of acetyl group from acetyl coenzyme A to glucosamine-1-phosphate (GlcN-1-P) to produce N-acetylglucosamine-1-phosphate (GlcNAc-1-P), which is converted into UDP-GlcNAc by the transfer of uridine 5-monophosphate (from uridine 5-triphosphate), a reaction catalyzed by the N-terminal domain. The chain is Bifunctional protein GlmU from Bacillus licheniformis (strain ATCC 14580 / DSM 13 / JCM 2505 / CCUG 7422 / NBRC 12200 / NCIMB 9375 / NCTC 10341 / NRRL NRS-1264 / Gibson 46).